A 381-amino-acid chain; its full sequence is Creatine kinase M-type (381 aa).

The 88-residue stretch at 11 to 98 (KLNYKPEEEY…FDPIIQDRHG (88 aa)) folds into the Phosphagen kinase N-terminal domain. The 243-residue stretch at 125–367 (YVLSSRVRTG…KLMVEMEKKL (243 aa)) folds into the Phosphagen kinase C-terminal domain. 128–132 (SSRVR) contributes to the ATP binding site. Ser164 is subject to Phosphoserine. Thr166 is modified (phosphothreonine). Ser178 carries the post-translational modification Phosphoserine. Thr180 carries the phosphothreonine modification. Position 191 (His191) interacts with ATP. The residue at position 199 (Ser199) is a Phosphoserine. Arg236 and Arg292 together coordinate ATP. 2 positions are modified to phosphothreonine: Thr313 and Thr322. ATP contacts are provided by residues 320–325 (RGTGGV) and Asp335. Residue Ser372 is modified to Phosphoserine.

This sequence belongs to the ATP:guanido phosphotransferase family. Dimer of identical or non-identical chains, which can be either B (brain type) or M (muscle type). With MM being the major form in skeletal muscle and myocardium, MB existing in myocardium, and BB existing in many tissues, especially brain.

The protein resides in the cytoplasm. It carries out the reaction creatine + ATP = N-phosphocreatine + ADP + H(+). Its function is as follows. Reversibly catalyzes the transfer of phosphate between ATP and various phosphogens (e.g. creatine phosphate). Creatine kinase isoenzymes play a central role in energy transduction in tissues with large, fluctuating energy demands, such as skeletal muscle, heart, brain and spermatozoa. In Canis lupus familiaris (Dog), this protein is Creatine kinase M-type (CKM).